Consider the following 269-residue polypeptide: MSANGTDQQSDHGHSTSNNKDCADSPVWLIPREISMTNAYGIVARPVLITNVGSPINIMLTGGWKGRIVTATSSMRDKAVLWTSDLQHTSPNRGLFGQDTVKTHAWFLAMGTPWFLGRNILPKELLWFLTERCYKEASSAFADIPVVLKTVFEQFTSNCVPGIKPALLMDPRRFLEMRDPRKIICLCESAVRDNPGAHGMLVNCLCDRPGGLQCLAFIKLLESLFNDVIGSPEFIYLNFKCKFDGIFTTAVRAISGPSFSYSVSKVGDI.

The segment at 1–22 (MSANGTDQQSDHGHSTSNNKDC) is disordered.

This is an uncharacterized protein from Gallus gallus (Chicken).